The primary structure comprises 556 residues: Serine/threonine-protein kinase PksC (556 aa).

The Protein kinase domain occupies 20–287 (YQLRDLLGEG…SAEAMRDECL (268 aa)). ATP is bound by residues 26-34 (LGEGGMASV) and Lys-49. Residue Asp-151 is the Proton acceptor of the active site. 2 disordered regions span residues 300–403 (IVPG…PGGK) and 435–485 (EDPE…DPDK). Positions 336 to 348 (QPTPSPGPNPYGT) are enriched in pro residues. 2 stretches are compositionally biased toward low complexity: residues 360–381 (YPQQAGYQTPAPAPYAQQQAAA) and 445–458 (STASVSASPSKAAG). The segment covering 461 to 475 (GPDKEKTIEKDKCTE) has biased composition (basic and acidic residues). The PASTA domain occupies 482-550 (DPDKIQVPDF…MPEIQLKVST (69 aa)).

The protein belongs to the protein kinase superfamily. Ser/Thr protein kinase family.

It catalyses the reaction L-seryl-[protein] + ATP = O-phospho-L-seryl-[protein] + ADP + H(+). The enzyme catalyses L-threonyl-[protein] + ATP = O-phospho-L-threonyl-[protein] + ADP + H(+). This Streptomyces coelicolor (strain ATCC BAA-471 / A3(2) / M145) protein is Serine/threonine-protein kinase PksC (pksC).